Reading from the N-terminus, the 545-residue chain is Glucose-6-phosphate isomerase (545 aa).

Glutamate 351 serves as the catalytic Proton donor. Residues histidine 382 and lysine 510 contribute to the active site.

It belongs to the GPI family.

The protein localises to the cytoplasm. It carries out the reaction alpha-D-glucose 6-phosphate = beta-D-fructose 6-phosphate. Its pathway is carbohydrate biosynthesis; gluconeogenesis. The protein operates within carbohydrate degradation; glycolysis; D-glyceraldehyde 3-phosphate and glycerone phosphate from D-glucose: step 2/4. Its function is as follows. Catalyzes the reversible isomerization of glucose-6-phosphate to fructose-6-phosphate. The polypeptide is Glucose-6-phosphate isomerase (Shewanella sp. (strain MR-7)).